The sequence spans 182 residues: MIKLTQEEQKYLFDSIRIIPDFPKKGIIFRDITTLLNNKEALNFLLKHLKERYKDYNLDFIAGTESRGFIFASMICAKLNLPFVPIRKPGKLPFETFSCEYDLEYGSDKVELHKDAFKNIQNARVLLVDDLIATGGTAIASYELIQKAGAKCVEACFLMNLKDLNGANKLEKLTSVYSVLEI.

The protein belongs to the purine/pyrimidine phosphoribosyltransferase family. In terms of assembly, homodimer.

The protein resides in the cytoplasm. It catalyses the reaction AMP + diphosphate = 5-phospho-alpha-D-ribose 1-diphosphate + adenine. It participates in purine metabolism; AMP biosynthesis via salvage pathway; AMP from adenine: step 1/1. Catalyzes a salvage reaction resulting in the formation of AMP, that is energically less costly than de novo synthesis. The chain is Adenine phosphoribosyltransferase from Campylobacter jejuni subsp. jejuni serotype O:23/36 (strain 81-176).